Here is a 723-residue protein sequence, read N- to C-terminus: Homeobox protein vnd (723 aa).

Disordered regions lie at residues 1–115, 224–307, 465–549, and 703–723; these read MTTS…GLAP, AHHG…HHHP, GSSG…RKRR, and HAHA…AWWP. Basic and acidic residues predominate over residues 10 to 22; it reads TPSKRDRDRERDN. Residues 23 to 36 are compositionally biased toward low complexity; sequence SSGLGSAGSLPASP. Polar residues predominate over residues 37–48; sequence QSAITVSPSSPA. Residues 61–92 show a composition bias toward basic and acidic residues; it reads LERKREREDREDREDRKERQERHERDRDHERF. Positions 97–111 are enriched in low complexity; sequence STASTTVPTNTSSSS. The span at 226 to 235 shows a compositional bias: basic and acidic residues; it reads HGSDLSHHSA. Residues 237-255 are compositionally biased toward polar residues; sequence ESTSGHRGQGSHTSPSALS. Residues 278–289 are compositionally biased toward basic and acidic residues; it reads EADHHSTTEHHA. Basic residues predominate over residues 298-307; that stretch reads HPHHQQHHHP. The span at 483-493 shows a compositional bias: low complexity; it reads NNNNNTTNNNN. A compositionally biased stretch (acidic residues) spans 512 to 528; the sequence is LNEDGIEEDIDDVDDAD. Residues 545-604 constitute a DNA-binding region (homeobox); it reads KRKRRVLFTKAQTYELERRFRQQRYLSAPEREHLASLIRLTPTQVKIWFQNHRYKTKRAQ. Basic residues predominate over residues 703–716; the sequence is HAHAHGHGHPHAHA.

The protein belongs to the NK-2 homeobox family. As to expression, expressed in the CNS and midgut.

The protein localises to the nucleus. Its function is as follows. Probable transcriptional regulator involved in the regulation of the proneural AS-C genes and the neurogenic genes of the enhancer of split complex. Could specifically activate proneural genes in the ventral-most neuroectoderm. The protein is Homeobox protein vnd (vnd) of Drosophila melanogaster (Fruit fly).